Consider the following 151-residue polypeptide: Nucleoside diphosphate kinase (151 aa).

Positions 11, 59, 87, 93, 104, and 114 each coordinate ATP. His117 functions as the Pros-phosphohistidine intermediate in the catalytic mechanism.

Belongs to the NDK family. Homotetramer. Mg(2+) serves as cofactor.

It localises to the cytoplasm. It carries out the reaction a 2'-deoxyribonucleoside 5'-diphosphate + ATP = a 2'-deoxyribonucleoside 5'-triphosphate + ADP. The enzyme catalyses a ribonucleoside 5'-diphosphate + ATP = a ribonucleoside 5'-triphosphate + ADP. Its function is as follows. Major role in the synthesis of nucleoside triphosphates other than ATP. The ATP gamma phosphate is transferred to the NDP beta phosphate via a ping-pong mechanism, using a phosphorylated active-site intermediate. This Prochlorococcus marinus (strain NATL1A) protein is Nucleoside diphosphate kinase.